The following is an 880-amino-acid chain: Beta-N-acetylglucosaminidase (880 aa).

Positions Met-1–Ala-27 are cleaved as a signal peptide. 3 consecutive SPOR domains span residues Ser-70–Tyr-149, Gly-150–Thr-229, and Val-230–Val-311. A run of 2 repeats spans residues Ile-439–Ala-473 and Ile-479–Ala-513. The SH3b domain maps to Thr-630–Ser-700.

The protein belongs to the glycosyl hydrolase 73 family. As to quaternary structure, homodimer.

The protein resides in the secreted. Its subcellular location is the cell wall. It catalyses the reaction an N(4)-(oligosaccharide-(1-&gt;3)-[oligosaccharide-(1-&gt;6)]-beta-D-Man-(1-&gt;4)-beta-D-GlcNAc-(1-&gt;4)-alpha-D-GlcNAc)-L-asparaginyl-[protein] + H2O = an oligosaccharide-(1-&gt;3)-[oligosaccharide-(1-&gt;6)]-beta-D-Man-(1-&gt;4)-D-GlcNAc + N(4)-(N-acetyl-beta-D-glucosaminyl)-L-asparaginyl-[protein]. Its activity is regulated as follows. Inhibited by diethyl pyrocarbonate, slightly by EDTA. Not inhibited by PMSF, diisopropyl fluorophosphate, 2-mercaptoethanol or N-ethylmaleimide. Its function is as follows. Cell wall hydrolase not involved in cell autolysis, competence, sporulation or germination. It hydrolyzes the beta-1,4 glycan bond between the N-acetylglucosaminyl and the N-acetylmuramoyl residues in the glycan chain. The chain is Beta-N-acetylglucosaminidase (lytD) from Bacillus subtilis (strain 168).